Consider the following 116-residue polypeptide: Phosphoribosyl-AMP cyclohydrolase (116 aa).

Residue D85 coordinates Mg(2+). Residue C86 coordinates Zn(2+). The Mg(2+) site is built by D87 and D89. C102 and C109 together coordinate Zn(2+).

This sequence belongs to the PRA-CH family. As to quaternary structure, homodimer. It depends on Mg(2+) as a cofactor. Requires Zn(2+) as cofactor.

It localises to the cytoplasm. It carries out the reaction 1-(5-phospho-beta-D-ribosyl)-5'-AMP + H2O = 1-(5-phospho-beta-D-ribosyl)-5-[(5-phospho-beta-D-ribosylamino)methylideneamino]imidazole-4-carboxamide. The protein operates within amino-acid biosynthesis; L-histidine biosynthesis; L-histidine from 5-phospho-alpha-D-ribose 1-diphosphate: step 3/9. Functionally, catalyzes the hydrolysis of the adenine ring of phosphoribosyl-AMP. The polypeptide is Phosphoribosyl-AMP cyclohydrolase (Corynebacterium diphtheriae (strain ATCC 700971 / NCTC 13129 / Biotype gravis)).